A 2690-amino-acid chain; its full sequence is Probable polyketide synthase 28 (2690 aa).

The Ketosynthase family 3 (KS3) domain maps to 15–443; it reads YGDVAVIGIG…GSNVCLILSE (429 aa). Residues C187, H326, and H366 each act as for beta-ketoacyl synthase activity in the active site. The segment at 651–684 is acyl/malonyl transferases; that stretch reads GVSADIIVGHSLGELSSSYSSGMIDFETLCHLIY. The active-site For acyl/malonyl transferase activity is the S661. The stretch at 906 to 934 forms a coiled coil; it reads NFKSQLTNINNNNNNINNNNNNNNNNNNN. Positions 916 to 946 are disordered; that stretch reads NNNNNINNNNNNNNNNNNNNNNNNNNNNNNN. The interval 973–1102 is N-terminal hotdog fold; sequence HEKITNEGPS…GNFSLFKHNS (130 aa). Positions 973 to 1285 constitute a PKS/mFAS DH domain; that stretch reads HEKITNEGPS…CSSVSLANPS (313 aa). The Proton acceptor; for dehydratase activity role is filled by H1014. The C-terminal hotdog fold stretch occupies residues 1119-1285; it reads NFTTISKHDF…CSSVSLANPS (167 aa). The Proton donor; for dehydratase activity role is filled by D1188. A disordered region spans residues 1401-1429; the sequence is LNHHNNSENKNKNNNNNNNSNNNENSNNE. The segment covering 1412-1429 has biased composition (low complexity); that stretch reads KNNNNNNNSNNNENSNNE. The region spanning 2594–2671 is the Carrier domain; sequence SDNEFIHSTI…QSIDIIKFGY (78 aa). Residue S2631 is modified to O-(pantetheine 4'-phosphoryl)serine.

Pantetheine 4'-phosphate serves as cofactor.

In terms of biological role, probable polyketide synthase. The sequence is that of Probable polyketide synthase 28 (pks28) from Dictyostelium discoideum (Social amoeba).